The sequence spans 484 residues: Ferrochelatase-2, chloroplastic (484 aa).

It belongs to the ferrochelatase family.

Its subcellular location is the plastid. The protein localises to the chloroplast. It catalyses the reaction heme b + 2 H(+) = protoporphyrin IX + Fe(2+). The protein operates within porphyrin-containing compound metabolism; protoheme biosynthesis; protoheme from protoporphyrin-IX: step 1/1. Its function is as follows. Catalyzes the ferrous insertion into protoporphyrin IX. The polypeptide is Ferrochelatase-2, chloroplastic (HEMH) (Hordeum vulgare (Barley)).